The sequence spans 149 residues: Nucleoside diphosphate kinase (149 aa).

Lys9, Phe57, Arg85, Thr91, Arg102, and Asn112 together coordinate ATP. His115 (pros-phosphohistidine intermediate) is an active-site residue.

Belongs to the NDK family. As to quaternary structure, homotetramer. It depends on Mg(2+) as a cofactor.

Its subcellular location is the cytoplasm. The catalysed reaction is a 2'-deoxyribonucleoside 5'-diphosphate + ATP = a 2'-deoxyribonucleoside 5'-triphosphate + ADP. It carries out the reaction a ribonucleoside 5'-diphosphate + ATP = a ribonucleoside 5'-triphosphate + ADP. Its function is as follows. Major role in the synthesis of nucleoside triphosphates other than ATP. The ATP gamma phosphate is transferred to the NDP beta phosphate via a ping-pong mechanism, using a phosphorylated active-site intermediate. This chain is Nucleoside diphosphate kinase, found in Cyanothece sp. (strain PCC 7425 / ATCC 29141).